A 162-amino-acid chain; its full sequence is Large ribosomal subunit protein uL11 (162 aa).

The tract at residues 1–27 is disordered; it reads MAGTIEVLVPGGEANPGPPLGPELGPT.

The protein belongs to the universal ribosomal protein uL11 family. In terms of assembly, part of the 50S ribosomal subunit. Forms part of the ribosomal stalk which helps the ribosome interact with GTP-bound translation factors. Forms a heptameric L10(L12)2(L12)2(L12)2 complex, where L10 forms an elongated spine to which 3 L12 dimers bind in a sequential fashion.

Its function is as follows. Forms part of the ribosomal stalk which helps the ribosome interact with GTP-bound translation factors. The protein is Large ribosomal subunit protein uL11 of Haloarcula marismortui (strain ATCC 43049 / DSM 3752 / JCM 8966 / VKM B-1809) (Halobacterium marismortui).